The sequence spans 249 residues: Coproheme decarboxylase (249 aa).

Residues Arg131, 145–149 (YPMDK), His172, and Gln185 contribute to the Fe-coproporphyrin III site. Residue Tyr145 is part of the active site.

This sequence belongs to the ChdC family. Type 1 subfamily. The cofactor is Fe-coproporphyrin III.

The enzyme catalyses Fe-coproporphyrin III + 2 H2O2 + 2 H(+) = heme b + 2 CO2 + 4 H2O. The catalysed reaction is Fe-coproporphyrin III + H2O2 + H(+) = harderoheme III + CO2 + 2 H2O. It carries out the reaction harderoheme III + H2O2 + H(+) = heme b + CO2 + 2 H2O. It functions in the pathway porphyrin-containing compound metabolism; protoheme biosynthesis. In terms of biological role, involved in coproporphyrin-dependent heme b biosynthesis. Catalyzes the decarboxylation of Fe-coproporphyrin III (coproheme) to heme b (protoheme IX), the last step of the pathway. The reaction occurs in a stepwise manner with a three-propionate intermediate. The sequence is that of Coproheme decarboxylase from Staphylococcus haemolyticus (strain JCSC1435).